The chain runs to 67 residues: Large ribosomal subunit protein uL29 (67 aa).

It belongs to the universal ribosomal protein uL29 family.

The polypeptide is Large ribosomal subunit protein uL29 (Halorhodospira halophila (strain DSM 244 / SL1) (Ectothiorhodospira halophila (strain DSM 244 / SL1))).